We begin with the raw amino-acid sequence, 345 residues long: S-adenosylmethionine:tRNA ribosyltransferase-isomerase (345 aa).

This sequence belongs to the QueA family. In terms of assembly, monomer.

The protein resides in the cytoplasm. It catalyses the reaction 7-aminomethyl-7-carbaguanosine(34) in tRNA + S-adenosyl-L-methionine = epoxyqueuosine(34) in tRNA + adenine + L-methionine + 2 H(+). It participates in tRNA modification; tRNA-queuosine biosynthesis. In terms of biological role, transfers and isomerizes the ribose moiety from AdoMet to the 7-aminomethyl group of 7-deazaguanine (preQ1-tRNA) to give epoxyqueuosine (oQ-tRNA). This Shewanella pealeana (strain ATCC 700345 / ANG-SQ1) protein is S-adenosylmethionine:tRNA ribosyltransferase-isomerase.